Consider the following 929-residue polypeptide: Bifunctional glutamine synthetase adenylyltransferase/adenylyl-removing enzyme (929 aa).

An adenylyl removase region spans residues 1–422 (MTTPISTSRA…TRHFEQIFAV (422 aa)). An adenylyl transferase region spans residues 429-929 (LGTFARIRPE…FQLWEDVFGT (501 aa)).

Belongs to the GlnE family. The cofactor is Mg(2+).

It carries out the reaction [glutamine synthetase]-O(4)-(5'-adenylyl)-L-tyrosine + phosphate = [glutamine synthetase]-L-tyrosine + ADP. The enzyme catalyses [glutamine synthetase]-L-tyrosine + ATP = [glutamine synthetase]-O(4)-(5'-adenylyl)-L-tyrosine + diphosphate. Involved in the regulation of glutamine synthetase GlnA, a key enzyme in the process to assimilate ammonia. When cellular nitrogen levels are high, the C-terminal adenylyl transferase (AT) inactivates GlnA by covalent transfer of an adenylyl group from ATP to specific tyrosine residue of GlnA, thus reducing its activity. Conversely, when nitrogen levels are low, the N-terminal adenylyl removase (AR) activates GlnA by removing the adenylyl group by phosphorolysis, increasing its activity. The regulatory region of GlnE binds the signal transduction protein PII (GlnB) which indicates the nitrogen status of the cell. In Nitrosomonas eutropha (strain DSM 101675 / C91 / Nm57), this protein is Bifunctional glutamine synthetase adenylyltransferase/adenylyl-removing enzyme.